A 274-amino-acid chain; its full sequence is Carbonic anhydrase (274 aa).

Cys39, His98, and Cys101 together coordinate Zn(2+). The segment at 214–274 (EDEYAPHPNS…QAERIYRGSR (61 aa)) is disordered. Composition is skewed to basic and acidic residues over residues 234 to 245 (PGKERPGREKAT) and 261 to 274 (LPRE…RGSR).

The protein belongs to the beta-class carbonic anhydrase family. A hexamer formed by a trimer of dimers. Interacts with the first 260 residues of CcmM; both the N-terminal 206 residues and the C-terminal tail contribute to CcmM binding. Interacts with full-length and the N-terminal 249 residues of CcmM. A probable CcmM-CcaA-CcmN complex as well as a CcaA-RuBisCO-CcmM complex can also be isolated. Requires Zn(2+) as cofactor.

It localises to the carboxysome. The catalysed reaction is hydrogencarbonate + H(+) = CO2 + H2O. Its activity is regulated as follows. Inhibited by ethoxyzolamide. In terms of biological role, reversible hydration of carbon dioxide. Essential to photosynthetic carbon dioxide fixation, supplies CO(2) to RuBisCO (ribulose bisphosphate carboxylase, rbcL-rbcS) in the carboxysome. The polypeptide is Carbonic anhydrase (Synechocystis sp. (strain ATCC 27184 / PCC 6803 / Kazusa)).